A 340-amino-acid chain; its full sequence is Sterol-4-alpha-carboxylate 3-dehydrogenase erg26, decarboxylating (340 aa).

Y144 acts as the Proton acceptor in catalysis. NAD(+) is bound at residue K148.

This sequence belongs to the 3-beta-HSD family. Heterotetramer of erg25, erg26, erg27 and erg28. Erg28 acts as a scaffold to tether erg27 and other 4,4-demethylation-related enzymes, forming a demethylation enzyme complex, in the endoplasmic reticulum.

It is found in the endoplasmic reticulum membrane. The catalysed reaction is 4beta-methylzymosterol-4alpha-carboxylate + NADP(+) = 3-dehydro-4-methylzymosterol + CO2 + NADPH. It functions in the pathway steroid biosynthesis; zymosterol biosynthesis; zymosterol from lanosterol: step 4/6. The protein operates within steroid metabolism; ergosterol biosynthesis. Sterol-4-alpha-carboxylate 3-dehydrogenase; part of the third module of ergosterol biosynthesis pathway that includes by the late steps of the pathway. Erg26 is a catalytic component of the C-4 demethylation complex that catalyzes the oxidative decarboxylation that results in a reduction of the 3-beta-hydroxy group at the C-3 carbon to an oxo group. The third module or late pathway involves the ergosterol synthesis itself through consecutive reactions that mainly occur in the endoplasmic reticulum (ER) membrane. Firstly, the squalene synthase erg9 catalyzes the condensation of 2 farnesyl pyrophosphate moieties to form squalene, which is the precursor of all steroids. Secondly, squalene is converted into lanosterol by the consecutive action of the squalene epoxidase erg1 and the lanosterol synthase erg7. The lanosterol 14-alpha-demethylase erg11/cyp1 catalyzes C14-demethylation of lanosterol to produce 4,4'-dimethyl cholesta-8,14,24-triene-3-beta-ol. In the next steps, a complex process involving various demethylation, reduction and desaturation reactions catalyzed by the C-14 reductase erg24 and the C-4 demethylation complex erg25-erg26-erg27 leads to the production of zymosterol. Erg28 likely functions in the C-4 demethylation complex reaction by tethering erg26 and Erg27 to the endoplasmic reticulum or to facilitate interaction between these proteins. Then, the sterol 24-C-methyltransferase erg6 catalyzes the methyl transfer from S-adenosyl-methionine to the C-24 of zymosterol to form fecosterol. The C-8 sterol isomerase erg2 catalyzes the reaction which results in unsaturation at C-7 in the B ring of sterols and thus converts fecosterol to episterol. The sterol-C5-desaturases erg31 and erg32 then catalyze the introduction of a C-5 double bond in the B ring to produce 5-dehydroepisterol. The C-22 sterol desaturase erg5 further converts 5-dehydroepisterol into ergosta-5,7,22,24(28)-tetraen-3beta-ol by forming the C-22(23) double bond in the sterol side chain. Finally, ergosta-5,7,22,24(28)-tetraen-3beta-ol is substrate of the C-24(28) sterol reductase erg4 to produce ergosterol. In the genus Schizosaccharomyces, a second route exists between lanosterol and fecosterol, via the methylation of lanosterol to eburicol by erg6, followed by C14-demethylation by erg11/cyp1 and C4-demethylation by the demethylation complex erg25-erg26-erg27. The chain is Sterol-4-alpha-carboxylate 3-dehydrogenase erg26, decarboxylating from Schizosaccharomyces pombe (strain 972 / ATCC 24843) (Fission yeast).